The sequence spans 265 residues: Thiazole synthase (265 aa).

Lys-103 serves as the catalytic Schiff-base intermediate with DXP. 1-deoxy-D-xylulose 5-phosphate contacts are provided by residues Gly-164, Ala-190–Gly-191, and Asn-212–Thr-213.

Belongs to the ThiG family. In terms of assembly, homotetramer. Forms heterodimers with either ThiH or ThiS.

Its subcellular location is the cytoplasm. It carries out the reaction [ThiS sulfur-carrier protein]-C-terminal-Gly-aminoethanethioate + 2-iminoacetate + 1-deoxy-D-xylulose 5-phosphate = [ThiS sulfur-carrier protein]-C-terminal Gly-Gly + 2-[(2R,5Z)-2-carboxy-4-methylthiazol-5(2H)-ylidene]ethyl phosphate + 2 H2O + H(+). It participates in cofactor biosynthesis; thiamine diphosphate biosynthesis. Its function is as follows. Catalyzes the rearrangement of 1-deoxy-D-xylulose 5-phosphate (DXP) to produce the thiazole phosphate moiety of thiamine. Sulfur is provided by the thiocarboxylate moiety of the carrier protein ThiS. In vitro, sulfur can be provided by H(2)S. The chain is Thiazole synthase from Bordetella bronchiseptica (strain ATCC BAA-588 / NCTC 13252 / RB50) (Alcaligenes bronchisepticus).